An 87-amino-acid chain; its full sequence is Small ribosomal subunit protein bS20 (87 aa).

Residues 1–20 are disordered; the sequence is MANSAQARKRARTALKQRAH. Basic residues predominate over residues 7-19; it reads ARKRARTALKQRA.

It belongs to the bacterial ribosomal protein bS20 family.

Its function is as follows. Binds directly to 16S ribosomal RNA. This chain is Small ribosomal subunit protein bS20, found in Chromobacterium violaceum (strain ATCC 12472 / DSM 30191 / JCM 1249 / CCUG 213 / NBRC 12614 / NCIMB 9131 / NCTC 9757 / MK).